The primary structure comprises 117 residues: Movement and RNA silencing protein (117 aa).

A helical membrane pass occupies residues 15–35 (FLFFGAIFIAITILYILLVLL). A disordered region spans residues 83 to 117 (RDQEPAVIPHVSQVIPSQPNRRDDQGRRGNAGPMF).

Its subcellular location is the host cell membrane. Transports viral genome to neighboring plant cells directly through plasmosdesmata, without any budding. The movement protein allows efficient cell to cell propagation, by bypassing the host cell wall barrier. Begomovirus genome is shuttled out of nucleus by Nuclear shuttle protein (NSP) and the movement protein transports the DNA-NSP complex to cell plasmodesmata and facilitates further movement across the cell wall. Acts as a suppressor of RNA-mediated gene silencing, also known as post-transcriptional gene silencing (PTGS), a mechanism of plant viral defense that limits the accumulation of viral RNAs. The polypeptide is Movement and RNA silencing protein (DNA-M) (Banana bunchy top virus (isolate Autralia) (BBTV)).